We begin with the raw amino-acid sequence, 687 residues long: POZ-, AT hook-, and zinc finger-containing protein 1 (687 aa).

Residues 41-130 (CDVLLRVGDE…AYTSRIVVRL (90 aa)) form the BTB domain. Lys112 is covalently cross-linked (Glycyl lysine isopeptide (Lys-Gly) (interchain with G-Cter in SUMO2)). The span at 250–260 (PFPSVASSAPP) shows a compositional bias: low complexity. Positions 250 to 278 (PFPSVASSAPPLTGKRGRGRPRKANLLDS) are disordered. The segment at residues 264 to 276 (KRGRGRPRKANLL) is a DNA-binding region (a.T hook). Residue Lys272 forms a Glycyl lysine isopeptide (Lys-Gly) (interchain with G-Cter in SUMO2) linkage. Ser282 carries the phosphoserine modification. The segment at 292–314 (LPCGLCGKVFTDANRLRQHEAQH) adopts a C2H2-type 1 zinc-finger fold. Residues 332 to 351 (GENGLPISEDPDGPRKRSRT) are disordered. C2H2-type zinc fingers lie at residues 355 to 377 (VACE…KLSH), 383 to 405 (YSCP…VRSH), 413 to 436 (YICQ…KQVH), 442 to 464 (HKCQ…LACH), and 495 to 518 (NFCS…KTHH). Positions 549 to 558 (EGQKCSHQDP) are enriched in basic and acidic residues. The segment at 549-603 (EGQKCSHQDPIESSDSYGDLSDASDLKTPEKQSANGSFSCDMAVPKNKMESDGEK) is disordered. A C2H2-type 7 zinc finger spans residues 605-628 (YPCPECGSFFRSKSYLNKHIQKVH).

It belongs to the krueppel C2H2-type zinc-finger protein family. Homodimer. Interacts with RNF4. Interacts (via C-terminus) with TP53; this interaction inhibits TP53 ability to activate transcription. Ubiquitous.

The protein resides in the nucleus. Functionally, transcriptional regulator that plays a role in many biological processes such as embryogenesis, senescence, T-cell development or neurogenesis. Interacts with the TP53 protein to control genes that are important in proliferation and in the DNA-damage response. Mechanistically, the interaction inhibits the DNA binding and transcriptional activity of TP53/p53. Part of the transcriptional network modulating regulatory T-cell development and controls the generation of the regulatory T-cell pool under homeostatic conditions. In terms of biological role, (Microbial infection) Plays a positive role in viral cDNA synthesis. The protein is POZ-, AT hook-, and zinc finger-containing protein 1 (PATZ1) of Homo sapiens (Human).